The following is a 97-amino-acid chain: MLNEEQVKKVAHLARLELSGEEVAQFTTQLGSILDYFQQLEELNVTDVPPTTRAIESSNITRADQLHPWAERENILAIAPEQDGDFFRVPKIISTED.

Belongs to the GatC family. In terms of assembly, heterotrimer of A, B and C subunits.

It catalyses the reaction L-glutamyl-tRNA(Gln) + L-glutamine + ATP + H2O = L-glutaminyl-tRNA(Gln) + L-glutamate + ADP + phosphate + H(+). The enzyme catalyses L-aspartyl-tRNA(Asn) + L-glutamine + ATP + H2O = L-asparaginyl-tRNA(Asn) + L-glutamate + ADP + phosphate + 2 H(+). In terms of biological role, allows the formation of correctly charged Asn-tRNA(Asn) or Gln-tRNA(Gln) through the transamidation of misacylated Asp-tRNA(Asn) or Glu-tRNA(Gln) in organisms which lack either or both of asparaginyl-tRNA or glutaminyl-tRNA synthetases. The reaction takes place in the presence of glutamine and ATP through an activated phospho-Asp-tRNA(Asn) or phospho-Glu-tRNA(Gln). The sequence is that of Aspartyl/glutamyl-tRNA(Asn/Gln) amidotransferase subunit C from Cyanothece sp. (strain PCC 7425 / ATCC 29141).